We begin with the raw amino-acid sequence, 159 residues long: Protein-export protein SecB (159 aa).

Belongs to the SecB family. As to quaternary structure, homotetramer, a dimer of dimers. One homotetramer interacts with 1 SecA dimer.

It localises to the cytoplasm. In terms of biological role, one of the proteins required for the normal export of preproteins out of the cell cytoplasm. It is a molecular chaperone that binds to a subset of precursor proteins, maintaining them in a translocation-competent state. It also specifically binds to its receptor SecA. The protein is Protein-export protein SecB of Rhizobium etli (strain CIAT 652).